Consider the following 262-residue polypeptide: Small ribosomal subunit protein eS1 (262 aa).

Basic and acidic residues predominate over residues 235-253 (HGDGKGSDEPGAKVSRPEA). Residues 235 to 262 (HGDGKGSDEPGAKVSRPEAYEPPVQESV) are disordered.

The protein belongs to the eukaryotic ribosomal protein eS1 family. As to quaternary structure, component of the small ribosomal subunit. Mature ribosomes consist of a small (40S) and a large (60S) subunit. The 40S subunit contains about 33 different proteins and 1 molecule of RNA (18S). The 60S subunit contains about 49 different proteins and 3 molecules of RNA (28S, 5.8S and 5S).

Its subcellular location is the cytoplasm. This chain is Small ribosomal subunit protein eS1, found in Triatoma infestans (Assassin bug).